The sequence spans 3303 residues: Protein unc-80 homolog (3303 aa).

Residues 1 to 37 are compositionally biased toward low complexity; that stretch reads MVTNAAGTAATGGATSNTTNNNNLQTNNNSHGANNNN. Positions 1–43 are disordered; it reads MVTNAAGTAATGGATSNTTNNNNLQTNNNSHGANNNNDDFDFD. A helical membrane pass occupies residues 202–222; that stretch reads LFSVPTITLFVYLFAPIIHHL. Disordered stretches follow at residues 284-316, 361-422, 491-512, 526-546, 1036-1067, 1443-1563, and 1627-1671; these read LSADAMSPKADSPQSGISDYGRQDEEGSWVSSP, LQQQ…SESI, LYQGPGSNSRDSPGSSVVKDYI, AEEPQSAPSTTERRGSEKKKR, FRRRTTGVRPTLTPRHSERALLSDSTSSSERN, LHEP…DDTA, and VEPT…KDRI. The span at 361–377 shows a compositional bias: low complexity; sequence LQQQQSQSRRGSRQSMN. 2 stretches are compositionally biased toward basic and acidic residues: residues 378 to 391 and 401 to 422; these read SRDKDKVPSTKFEF and SMKEKRSASIEKETDSDKSESI. The span at 495 to 505 shows a compositional bias: polar residues; the sequence is PGSNSRDSPGS. The segment covering 1058 to 1067 has biased composition (polar residues); it reads SDSTSSSERN. A compositionally biased stretch (basic residues) spans 1490–1499; it reads FKRRSLKLRR. Over residues 1546–1556 the composition is skewed to polar residues; the sequence is DDQQPESPTDS. Positions 1660–1671 are enriched in basic and acidic residues; it reads KRKDSLSRKDRI. Helical transmembrane passes span 1969 to 1989, 2018 to 2038, and 2048 to 2068; these read VYEIAYQVIWVCLVEESALFL, LPQQAAFALYNSIIGYIMFYV, and LVGSALSVLWMVVHSVHGIMF. Disordered stretches follow at residues 2518-2550, 3003-3158, and 3170-3262; these read NGPYRNSPEHKGSSQRNCSRGPPCSPGLDFEEE, EEKR…FKAQ, and FRHS…YRDN. Residues 3003 to 3018 are compositionally biased toward basic and acidic residues; sequence EEKRYDRESSEQKKSD. Polar residues-rich tracts occupy residues 3033–3053 and 3071–3106; these read QRPSLISIFTGTTTGQASHSH and PSDTLSQQTLHPPRESLSSSSTGRDPHTTTSESQSG. Positions 3124–3134 are enriched in gly residues; sequence SGHGSGGGIGT. The span at 3135-3152 shows a compositional bias: low complexity; the sequence is GAASAVPSHLSHSQSLQQ. Basic residues predominate over residues 3198 to 3217; it reads SRLQRSKAASRKTFRLKRSR. Polar residues predominate over residues 3226–3239; that stretch reads IVTSQEEQAPQAQA. A compositionally biased stretch (low complexity) spans 3246 to 3257; the sequence is SWDSVSQTSSTS.

This sequence belongs to the unc-80 family. In terms of assembly, interacts with unc79 and na. Can interact with unc79 independently of na.

It localises to the membrane. In terms of biological role, component of the na (narrow abdomen) sodium channel complex. In the circadian clock neurons it functions with na and unc79 to promote circadian rhythmicity. This chain is Protein unc-80 homolog, found in Drosophila melanogaster (Fruit fly).